A 722-amino-acid chain; its full sequence is Protein HAPLESS 2-A (722 aa).

The first 24 residues, 1–24 (MPRRRGTPLPTILLLLAFVGGACG), serve as a signal peptide directing secretion. The Extracellular segment spans residues 25–552 (TEILSKSRLE…LFDFGCHIQY (528 aa)). Disulfide bonds link Cys36/Cys48, Cys129/Cys159, Cys141/Cys188, Cys160/Cys315, Cys162/Cys171, Cys298/Cys322, and Cys435/Cys473. The helical transmembrane segment at 553-573 (VCIGWILLLLLIPAAVVFLWL) threads the bilayer. At 574–722 (LHQEGLFDPL…HRDGHYSPSV (149 aa)) the chain is on the cytoplasmic side. The span at 598 to 641 (RRRHQKGRHHRHHHDHRHRHGHSHGDHHHHYHGGHHQRRRHHHP) shows a compositional bias: basic residues. 2 disordered regions span residues 598-665 (RRRH…RNHH) and 680-722 (RLDR…SPSV). The span at 646 to 662 (VEGHHHDRQQHSHEAGR) shows a compositional bias: basic and acidic residues. Positions 701 to 711 (RRSRHERHGGH) are enriched in basic residues. The span at 712–722 (GHRDGHYSPSV) shows a compositional bias: basic and acidic residues.

It belongs to the HAP2/GCS1 family.

It is found in the endoplasmic reticulum membrane. Its subcellular location is the cell membrane. Its function is as follows. Required for male fertility. Plays a role in pollen tube guidance and successful gamete attachment. Essential for the fusion of gametes during double fertilization, where one male gamete fuses with the egg to produce a zygote, and another male gamete fuses with the central cell to produce the endosperm. Mediates the fusion of cell membranes. Not required for pollen tube outgrowth. This is Protein HAPLESS 2-A (HAP2A) from Oryza sativa subsp. japonica (Rice).